Consider the following 694-residue polypeptide: Polyphosphate kinase (694 aa).

Position 45 (Asn-45) interacts with ATP. Mg(2+) contacts are provided by Arg-367 and Arg-397. His-427 (phosphohistidine intermediate) is an active-site residue. Tyr-460, Arg-553, and His-580 together coordinate ATP.

This sequence belongs to the polyphosphate kinase 1 (PPK1) family. Requires Mg(2+) as cofactor. An intermediate of this reaction is the autophosphorylated ppk in which a phosphate is covalently linked to a histidine residue through a N-P bond.

The enzyme catalyses [phosphate](n) + ATP = [phosphate](n+1) + ADP. Catalyzes the reversible transfer of the terminal phosphate of ATP to form a long-chain polyphosphate (polyP). This Campylobacter jejuni (strain RM1221) protein is Polyphosphate kinase.